The primary structure comprises 215 residues: Phosphatidylserine decarboxylase proenzyme (215 aa).

S183 acts as the Schiff-base intermediate with substrate; via pyruvic acid in catalysis. Residue S183 is modified to Pyruvic acid (Ser); by autocatalysis.

It belongs to the phosphatidylserine decarboxylase family. PSD-A subfamily. Heterodimer of a large membrane-associated beta subunit and a small pyruvoyl-containing alpha subunit. The cofactor is pyruvate. Post-translationally, is synthesized initially as an inactive proenzyme. Formation of the active enzyme involves a self-maturation process in which the active site pyruvoyl group is generated from an internal serine residue via an autocatalytic post-translational modification. Two non-identical subunits are generated from the proenzyme in this reaction, and the pyruvate is formed at the N-terminus of the alpha chain, which is derived from the carboxyl end of the proenzyme. The post-translation cleavage follows an unusual pathway, termed non-hydrolytic serinolysis, in which the side chain hydroxyl group of the serine supplies its oxygen atom to form the C-terminus of the beta chain, while the remainder of the serine residue undergoes an oxidative deamination to produce ammonia and the pyruvoyl prosthetic group on the alpha chain.

Its subcellular location is the cell membrane. The enzyme catalyses a 1,2-diacyl-sn-glycero-3-phospho-L-serine + H(+) = a 1,2-diacyl-sn-glycero-3-phosphoethanolamine + CO2. The protein operates within phospholipid metabolism; phosphatidylethanolamine biosynthesis; phosphatidylethanolamine from CDP-diacylglycerol: step 2/2. Its function is as follows. Catalyzes the formation of phosphatidylethanolamine (PtdEtn) from phosphatidylserine (PtdSer). This Symbiobacterium thermophilum (strain DSM 24528 / JCM 14929 / IAM 14863 / T) protein is Phosphatidylserine decarboxylase proenzyme.